The sequence spans 51 residues: Structural protein ORF5a (51 aa).

The chain crosses the membrane as a helical span at residues 11–28; that stretch reads RGLLLAIAFFVVYRAVLF.

This sequence belongs to the arteriviridae ORF5a protein family. Interacts with GP2b and GP4.

Its subcellular location is the virion. It is found in the host cell membrane. Functionally, minor virion component that plays an essential role in virus infectivity. This is Structural protein ORF5a from Porcine reproductive and respiratory syndrome virus (strain VR-2332) (PRRSV).